We begin with the raw amino-acid sequence, 480 residues long: uncharacterized protein (480 aa).

The zn(2)-C6 fungal-type DNA-binding region spans 16–46; that stretch reads CDRCRRRKIRCTGSDIPGQPCLACQKAHADC. The span at 298 to 307 shows a compositional bias: low complexity; sequence SFGASVSPKS. Positions 298 to 325 are disordered; that stretch reads SFGASVSPKSTPGSNSTGAAVDTNSVHS. Over residues 308–325 the composition is skewed to polar residues; it reads TPGSNSTGAAVDTNSVHS.

Its subcellular location is the cytoplasm. It localises to the nucleus. This is an uncharacterized protein from Schizosaccharomyces pombe (strain 972 / ATCC 24843) (Fission yeast).